We begin with the raw amino-acid sequence, 265 residues long: Small ribosomal subunit protein uS5 (265 aa).

A compositionally biased stretch (low complexity) spans 1–15 (MADTQPAQEAPAADA). The interval 1 to 44 (MADTQPAQEAPAADAPRAERNFGRGRGGRGGRGRGRGGPGEEKE) is disordered. The span at 26–35 (RGGRGGRGRG) shows a compositional bias: basic residues. The S5 DRBM domain maps to 88–151 (LHDEMMKIYP…IAAKLNIVPV (64 aa)). Residues 245-265 (TEPSRDPTDEHGELLAEMTTA) form a disordered region. Basic and acidic residues predominate over residues 246 to 258 (EPSRDPTDEHGEL).

The protein belongs to the universal ribosomal protein uS5 family.

Component of the ribosome, a large ribonucleoprotein complex responsible for the synthesis of proteins in the cell. The small ribosomal subunit (SSU) binds messenger RNAs (mRNAs) and translates the encoded message by selecting cognate aminoacyl-transfer RNA (tRNA) molecules. The large subunit (LSU) contains the ribosomal catalytic site termed the peptidyl transferase center (PTC), which catalyzes the formation of peptide bonds, thereby polymerizing the amino acids delivered by tRNAs into a polypeptide chain. The nascent polypeptides leave the ribosome through a tunnel in the LSU and interact with protein factors that function in enzymatic processing, targeting, and the membrane insertion of nascent chains at the exit of the ribosomal tunnel. Plays a role in the assembly and function of the 40S ribosomal subunit. Mutations in this protein affects the control of translational fidelity. Involved in nucleolar processing of pre-18S ribosomal RNA and ribosome assembly. In Leishmania amazonensis, this protein is Small ribosomal subunit protein uS5.